The primary structure comprises 333 residues: Phosphate acyltransferase (333 aa).

The protein belongs to the PlsX family. Homodimer. Probably interacts with PlsY.

The protein resides in the cytoplasm. It catalyses the reaction a fatty acyl-[ACP] + phosphate = an acyl phosphate + holo-[ACP]. It functions in the pathway lipid metabolism; phospholipid metabolism. In terms of biological role, catalyzes the reversible formation of acyl-phosphate (acyl-PO(4)) from acyl-[acyl-carrier-protein] (acyl-ACP). This enzyme utilizes acyl-ACP as fatty acyl donor, but not acyl-CoA. The polypeptide is Phosphate acyltransferase (Bacillus subtilis (strain 168)).